The primary structure comprises 269 residues: MSISPGRSFSPMRASGLTGITSAGPTAKLEHVSERFASLWTDLEHEKQNRKLAESSRFQLFTEAVSRLEKGLEAEVKRRAESDKQLQSHFEGEIRALAERSAAQHVDMQNSLKQAVDSLSNRLQDLHSLVREEREQRRNDIEHLATSLVGKVNECVQALDEERNSRLQDQSLSLKRFGEDLITIQQRVDQEKLVRDAELSGLRSEVHEALGNRNLADEQFRNMTLDELTALKGALALEREERIAEDDEIVQAINDYTKALQEGLKLVST.

A disordered region spans residues 1–23 (MSISPGRSFSPMRASGLTGITSA). Residues 1–24 (MSISPGRSFSPMRASGLTGITSAG) are nonhelical region. Positions 25-269 (PTAKLEHVSE…LQEGLKLVST (245 aa)) are rod. Residues 98-144 (AERSAAQHVDMQNSLKQAVDSLSNRLQDLHSLVREEREQRRNDIEHL) are a coiled coil.

It belongs to the SF-assemblin family.

Its subcellular location is the cytoplasm. It localises to the cytoskeleton. Major component of the striated microtubule-associated fibers (SMAFs; system-I-fibers). This is SF-assemblin from Chlamydomonas moewusii (Chlamydomonas eugametos).